The sequence spans 604 residues: Aspartate--tRNA(Asp/Asn) ligase (604 aa).

Position 177 (Glu-177) interacts with L-aspartate. An aspartate region spans residues 201 to 204 (QLFK). Arg-223 provides a ligand contact to L-aspartate. Residues 223-225 (RDE) and Gln-232 each bind ATP. His-457 is a binding site for L-aspartate. Glu-495 is a binding site for ATP. Residue Arg-502 coordinates L-aspartate. 547–550 (GLDR) is an ATP binding site.

The protein belongs to the class-II aminoacyl-tRNA synthetase family. Type 1 subfamily. In terms of assembly, homodimer.

It is found in the cytoplasm. The enzyme catalyses tRNA(Asx) + L-aspartate + ATP = L-aspartyl-tRNA(Asx) + AMP + diphosphate. Functionally, aspartyl-tRNA synthetase with relaxed tRNA specificity since it is able to aspartylate not only its cognate tRNA(Asp) but also tRNA(Asn). Reaction proceeds in two steps: L-aspartate is first activated by ATP to form Asp-AMP and then transferred to the acceptor end of tRNA(Asp/Asn). The chain is Aspartate--tRNA(Asp/Asn) ligase from Synechococcus sp. (strain RCC307).